The primary structure comprises 776 residues: Peregrinol diphosphate synthase CPS1, chloroplastic (776 aa).

The transit peptide at Met-1 to Arg-17 directs the protein to the chloroplast. Lys-238 serves as a coordination point for substrate. Residues Asp-371 and Asp-373 each contribute to the Mg(2+) site. The DXDD motif signature appears at Asp-371–Asp-374. Residue Lys-457 participates in substrate binding.

This sequence belongs to the terpene synthase family. Mg(2+) is required as a cofactor. As to expression, present in both leaves and flowers, with higher levels in leaves.

It localises to the plastid. It is found in the chloroplast. It carries out the reaction peregrinol diphosphate = (2E,6E,10E)-geranylgeranyl diphosphate + H2O. Its pathway is secondary metabolite biosynthesis; terpenoid biosynthesis. In terms of biological role, involved in the biosynthesis of labdane-type diterpenoid including marrubiin and other labdane-related furanoid diterpenoids with potential applications as anti-diabetics, analgesics or vasorelaxants. Terpene synthase that produces peregrinol diphosphate from geranylgeranyl diphosphate (GGPP). This is Peregrinol diphosphate synthase CPS1, chloroplastic from Marrubium vulgare (White horehound).